The chain runs to 234 residues: Peroxiredoxin-2E, chloroplastic (234 aa).

The N-terminal 70 residues, 1 to 70, are a transit peptide targeting the chloroplast; the sequence is MATSLSVSRF…TRSFATTPVT (70 aa). The Thioredoxin domain occupies 73–234; it reads ISVGDKLPDS…SSAEDMLKAL (162 aa). The residue at position 82 (Ser82) is a Phosphoserine. The active-site Cysteine sulfenic acid (-SOH) intermediate is the Cys121.

Belongs to the peroxiredoxin family. Prx5 subfamily. As to quaternary structure, monomer. In terms of tissue distribution, expressed in all tissues but predominantly in buds, siliques and seeds.

The protein resides in the plastid. The protein localises to the chloroplast stroma. The enzyme catalyses [glutaredoxin]-dithiol + a hydroperoxide = [glutaredoxin]-disulfide + an alcohol + H2O. Thiol-specific peroxidase that catalyzes the reduction of hydrogen peroxide and organic hydroperoxides to water and alcohols, respectively. Plays a role in cell protection against oxidative stress by detoxifying peroxides. May be involved in chloroplast redox homeostasis. The polypeptide is Peroxiredoxin-2E, chloroplastic (PRXIIE) (Arabidopsis thaliana (Mouse-ear cress)).